The following is a 426-amino-acid chain: Serine--tRNA ligase (426 aa).

Residue 233–235 (TAE) participates in L-serine binding. 264 to 266 (RRE) provides a ligand contact to ATP. Residue Glu287 coordinates L-serine. 351–354 (EISS) contacts ATP. Ser386 provides a ligand contact to L-serine.

This sequence belongs to the class-II aminoacyl-tRNA synthetase family. Type-1 seryl-tRNA synthetase subfamily. Homodimer. The tRNA molecule binds across the dimer.

It is found in the cytoplasm. The catalysed reaction is tRNA(Ser) + L-serine + ATP = L-seryl-tRNA(Ser) + AMP + diphosphate + H(+). It catalyses the reaction tRNA(Sec) + L-serine + ATP = L-seryl-tRNA(Sec) + AMP + diphosphate + H(+). It functions in the pathway aminoacyl-tRNA biosynthesis; selenocysteinyl-tRNA(Sec) biosynthesis; L-seryl-tRNA(Sec) from L-serine and tRNA(Sec): step 1/1. Catalyzes the attachment of serine to tRNA(Ser). Is also able to aminoacylate tRNA(Sec) with serine, to form the misacylated tRNA L-seryl-tRNA(Sec), which will be further converted into selenocysteinyl-tRNA(Sec). The sequence is that of Serine--tRNA ligase from Thermosipho africanus (strain TCF52B).